The sequence spans 83 residues: Exodeoxyribonuclease 7 small subunit (83 aa).

The protein belongs to the XseB family. In terms of assembly, heterooligomer composed of large and small subunits.

Its subcellular location is the cytoplasm. It catalyses the reaction Exonucleolytic cleavage in either 5'- to 3'- or 3'- to 5'-direction to yield nucleoside 5'-phosphates.. Bidirectionally degrades single-stranded DNA into large acid-insoluble oligonucleotides, which are then degraded further into small acid-soluble oligonucleotides. The protein is Exodeoxyribonuclease 7 small subunit of Brucella melitensis biotype 1 (strain ATCC 23456 / CCUG 17765 / NCTC 10094 / 16M).